Consider the following 195-residue polypeptide: FMN-dependent NADH:quinone oxidoreductase (195 aa).

FMN contacts are provided by residues Ser10, 16-18 (SQS), and 91-94 (MYNF).

Belongs to the azoreductase type 1 family. Homodimer. FMN serves as cofactor.

The catalysed reaction is 2 a quinone + NADH + H(+) = 2 a 1,4-benzosemiquinone + NAD(+). The enzyme catalyses N,N-dimethyl-1,4-phenylenediamine + anthranilate + 2 NAD(+) = 2-(4-dimethylaminophenyl)diazenylbenzoate + 2 NADH + 2 H(+). Functionally, quinone reductase that provides resistance to thiol-specific stress caused by electrophilic quinones. In terms of biological role, also exhibits azoreductase activity. Catalyzes the reductive cleavage of the azo bond in aromatic azo compounds to the corresponding amines. This Aeromonas salmonicida (strain A449) protein is FMN-dependent NADH:quinone oxidoreductase.